The primary structure comprises 365 residues: Isopentenyl-diphosphate delta-isomerase (365 aa).

Position 8-9 (8-9 (RK)) interacts with substrate. FMN contacts are provided by residues 67–69 (SIT), Ser97, and Asn126. 97-99 (SQR) contributes to the substrate binding site. Position 160 (Gln160) interacts with substrate. Glu161 is a binding site for Mg(2+). FMN is bound by residues Lys192, Thr222, 272 to 274 (GIR), and 293 to 294 (AL).

The protein belongs to the IPP isomerase type 2 family. Homooctamer. Dimer of tetramers. It depends on FMN as a cofactor. NADPH serves as cofactor. The cofactor is Mg(2+).

The protein resides in the cytoplasm. It carries out the reaction isopentenyl diphosphate = dimethylallyl diphosphate. Functionally, involved in the biosynthesis of isoprenoids. Catalyzes the 1,3-allylic rearrangement of the homoallylic substrate isopentenyl (IPP) to its allylic isomer, dimethylallyl diphosphate (DMAPP). This Methanosarcina barkeri (strain Fusaro / DSM 804) protein is Isopentenyl-diphosphate delta-isomerase.